An 800-amino-acid chain; its full sequence is Fibroblast growth factor receptor 3 (800 aa).

A signal peptide spans 1–20; sequence MVPLCLLLYLATLVFPPVYS. The Ig-like C2-type 1 domain occupies 21-122; the sequence is AHLLSPEPTD…YTVKVIDSLS (102 aa). Over 21 to 363 the chain is Extracellular; the sequence is AHLLSPEPTD…EMEREDDYAD (343 aa). A disulfide bridge links Cys55 with Cys101. N-linked (GlcNAc...) asparagine glycans are attached at residues Asn77, Asn90, and Asn112. A compositionally biased stretch (acidic residues) spans 124–136; sequence GDDEDYDEDEDEA. The segment at 124–143 is disordered; sequence GDDEDYDEDEDEAGNGNAEA. Ig-like C2-type domains lie at 144–237 and 246–348; these read PYWT…YQLD and PILQ…AWLT. Cys169 and Cys221 form a disulfide bridge. Asn218, Asn255, Asn287, Asn308, and Asn321 each carry an N-linked (GlcNAc...) asparagine glycan. An intrachain disulfide couples Cys268 to Cys332. A helical membrane pass occupies residues 364-384; it reads ILIYVTSCVLFILTMVIIILC. At 385-800 the chain is on the cytoplasmic side; that stretch reads RMWINTQKTL…HHHSNGVIRT (416 aa). In terms of domain architecture, Protein kinase spans 460–739; sequence LTLGKPLGEG…RQLVEDHDRV (280 aa). ATP-binding positions include 466–474 and Lys496; that span reads LGEGCFGQV. The active-site Proton acceptor is Asp605. 4 positions are modified to phosphotyrosine; by autocatalysis: Tyr635, Tyr636, Tyr712, and Tyr748. The span at 764 to 773 shows a compositional bias: polar residues; sequence DSNSTCSSGD. Residues 764-800 are disordered; sequence DSNSTCSSGDDSVFAHDPLPEEPCLPKHHHSNGVIRT.

This sequence belongs to the protein kinase superfamily. Tyr protein kinase family. Fibroblast growth factor receptor subfamily. In terms of assembly, monomer. Homodimer after ligand binding. In terms of processing, autophosphorylated. Binding of FGF family members together with heparan sulfate proteoglycan or heparin promotes receptor dimerization and autophosphorylation on tyrosine residues. Autophosphorylation occurs in trans between the two FGFR molecules present in the dimer.

It localises to the cell membrane. It carries out the reaction L-tyrosyl-[protein] + ATP = O-phospho-L-tyrosyl-[protein] + ADP + H(+). Present in an inactive conformation in the absence of bound ligand. Ligand binding leads to dimerization and activation by autophosphorylation on tyrosine residues. Its function is as follows. Tyrosine-protein kinase that acts as a cell-surface receptor for fibroblast growth factors and plays an essential role in the regulation of cell proliferation, differentiation and apoptosis. Plays an essential role in the regulation of chondrocyte differentiation, proliferation and apoptosis, and is required for normal skeleton development. Regulates both osteogenesis and postnatal bone mineralization by osteoblasts. Promotes apoptosis in chondrocytes, but can also promote cancer cell proliferation. Phosphorylates PLCG1, CBL and FRS2. Ligand binding leads to the activation of several signaling cascades. Activation of PLCG1 leads to the production of the cellular signaling molecules diacylglycerol and inositol 1,4,5-trisphosphate. Phosphorylation of FRS2 triggers recruitment of GRB2, GAB1, PIK3R1 and SOS1, and mediates activation of RAS, MAPK1/ERK2, MAPK3/ERK1 and the MAP kinase signaling pathway, as well as of the AKT1 signaling pathway. This Danio rerio (Zebrafish) protein is Fibroblast growth factor receptor 3 (fgfr3).